The chain runs to 383 residues: uncharacterized protein (383 aa).

The protein to V.anguillarum virulence protein VirA.

In terms of biological role, could have an enzymatic function. This is an uncharacterized protein from Sinorhizobium fredii (strain NBRC 101917 / NGR234).